The chain runs to 714 residues: Calpain-1 catalytic subunit (714 aa).

In terms of domain architecture, Calpain catalytic spans 55-354 (LFRDEAFPPV…FTRLEICNLT (300 aa)). 2 residues coordinate Ca(2+): glutamine 109 and aspartate 114. Residues cysteine 115, histidine 272, and asparagine 296 contribute to the active site. Asparagine 316, aspartate 318, and aspartate 323 together coordinate Ca(2+). Position 354 is a phosphothreonine (threonine 354). The segment at 355-526 (PDALKSRTIR…KSAGTAELDD (172 aa)) is domain III. Positions 527 to 542 (QIQANLPDEQVLSEEE) are linker. EF-hand domains are found at residues 541–576 (EEIDENFKALFRQLAGEDMETSVKELRTILNRIISK), 585–618 (FSLESCRSMVNLMDRDGNGKLGLVEFNILWNRIR), 615–650 (NRIRNYLSIFRKFDLDKSGSMSAYEMRMAIESAGFK), and 680–714 (VRLETMFRFFKTLDTDLDGVVTFDLFKWLQLTMFA). The tract at residues 543-713 (IDENFKALFR…LFKWLQLTMF (171 aa)) is domain IV. Aspartate 598, aspartate 600, asparagine 602, lysine 604, glutamate 609, aspartate 628, aspartate 630, serine 632, serine 634, and glutamate 639 together coordinate Ca(2+).

This sequence belongs to the peptidase C2 family. Forms a heterodimer with a small (regulatory) subunit CAPNS1. It depends on Ca(2+) as a cofactor. In terms of processing, undergoes calcium-induced successive autoproteolytic cleavages that generate a membrane-bound 78 kDa active form and an intracellular 75 kDa active form. Calpastatin reduces with high efficiency the transition from 78 kDa to 75 kDa calpain forms.

The protein localises to the cytoplasm. The protein resides in the cell membrane. It carries out the reaction Broad endopeptidase specificity.. Its activity is regulated as follows. Activated by micromolar concentrations of calcium and inhibited by calpastatin. Calcium-regulated non-lysosomal thiol-protease which catalyzes limited proteolysis of substrates involved in cytoskeletal remodeling and signal transduction. Proteolytically cleaves CTBP1. Cleaves and activates caspase-7 (CASP7). The polypeptide is Calpain-1 catalytic subunit (Pongo abelii (Sumatran orangutan)).